We begin with the raw amino-acid sequence, 567 residues long: Dihydrolipoyl dehydrogenase 2, chloroplastic (567 aa).

Residues 1–67 constitute a chloroplast transit peptide; sequence MQSVLSLSFS…HIQSRRIEVS (67 aa). Residues 114-122, K131, G197, and 221-223 contribute to the FAD site; these read EGDVVGGTC and TGS. The cysteines at positions 122 and 127 are disulfide-linked. NAD(+) is bound by residues 258-265, E281, and G354; that span reads GSGYIGLE. FAD is bound by residues D400 and 406–409; that span reads MLAH. H536 functions as the Proton acceptor in the catalytic mechanism.

Belongs to the class-I pyridine nucleotide-disulfide oxidoreductase family. In terms of assembly, homodimer. Part of the plastidial pyruvate dehydrogenase complex (PDC) containing multiple copies of three enzymatic components: pyruvate dehydrogenase (E1), dihydrolipoamide acetyltransferase (E2) and lipoamide dehydrogenase (E3). It depends on FAD as a cofactor. As to expression, expressed mainly in flower buds and immature siliques, and to a lesser extent in flowers.

The protein resides in the plastid. It is found in the chloroplast stroma. The enzyme catalyses N(6)-[(R)-dihydrolipoyl]-L-lysyl-[protein] + NAD(+) = N(6)-[(R)-lipoyl]-L-lysyl-[protein] + NADH + H(+). Functionally, lipoamide dehydrogenase is a component of the plastidial pyruvate dehydrogenase complex (PDC). This chain is Dihydrolipoyl dehydrogenase 2, chloroplastic (LPD2), found in Arabidopsis thaliana (Mouse-ear cress).